A 752-amino-acid chain; its full sequence is F-box and WD repeat domain containing protein 10B (752 aa).

WD repeat units follow at residues 169-206, 451-490, 493-532, 534-569, 572-609, and 611-652; these read GLNQ…TSLP, GHAG…CTRI, GHQG…KTFR, KDPI…LVKT, GHEG…ERCL, and AFKH…KVIK.

In terms of tissue distribution, expressed in pancreas, heart and skeletal muscle.

This is F-box and WD repeat domain containing protein 10B from Homo sapiens (Human).